The sequence spans 438 residues: 3-phosphoshikimate 1-carboxyvinyltransferase (438 aa).

3-phosphoshikimate-binding residues include lysine 21, serine 22, and arginine 26. Lysine 21 is a binding site for phosphoenolpyruvate. Positions 95 and 123 each coordinate phosphoenolpyruvate. 3-phosphoshikimate is bound by residues serine 167, glutamine 169, aspartate 315, and lysine 342. A phosphoenolpyruvate-binding site is contributed by glutamine 169. The active-site Proton acceptor is aspartate 315. The phosphoenolpyruvate site is built by arginine 346 and arginine 387.

It belongs to the EPSP synthase family. Monomer.

It is found in the cytoplasm. The enzyme catalyses 3-phosphoshikimate + phosphoenolpyruvate = 5-O-(1-carboxyvinyl)-3-phosphoshikimate + phosphate. The protein operates within metabolic intermediate biosynthesis; chorismate biosynthesis; chorismate from D-erythrose 4-phosphate and phosphoenolpyruvate: step 6/7. Its function is as follows. Catalyzes the transfer of the enolpyruvyl moiety of phosphoenolpyruvate (PEP) to the 5-hydroxyl of shikimate-3-phosphate (S3P) to produce enolpyruvyl shikimate-3-phosphate and inorganic phosphate. In Coxiella burnetii (strain CbuK_Q154) (Coxiella burnetii (strain Q154)), this protein is 3-phosphoshikimate 1-carboxyvinyltransferase.